Reading from the N-terminus, the 303-residue chain is Cell division protein ZipA (303 aa).

Residues 1–6 (MMQDLR) lie on the Periplasmic side of the membrane. Residues 7 to 27 (LILIIVGAIAIIALLLHGLWT) form a helical membrane-spanning segment. The Cytoplasmic segment spans residues 28–303 (SRKERSSLFR…RIRSTLGVQV (276 aa)). Disordered regions lie at residues 39-61 (RPVK…DEAF), 66-85 (KPYA…EPAI), and 124-159 (EQEP…GEKE). 2 stretches are compositionally biased toward basic and acidic residues: residues 75–85 (SHQEYKAEPAI) and 139–159 (ESER…GEKE).

The protein belongs to the ZipA family. As to quaternary structure, interacts with FtsZ via their C-terminal domains.

Its subcellular location is the cell inner membrane. In terms of biological role, essential cell division protein that stabilizes the FtsZ protofilaments by cross-linking them and that serves as a cytoplasmic membrane anchor for the Z ring. Also required for the recruitment to the septal ring of downstream cell division proteins. This Photorhabdus laumondii subsp. laumondii (strain DSM 15139 / CIP 105565 / TT01) (Photorhabdus luminescens subsp. laumondii) protein is Cell division protein ZipA.